Reading from the N-terminus, the 1677-residue chain is Zinc finger protein 831 (1677 aa).

The segment covering 1 to 26 (MEVPEPTCPAPPARDQPAPTPGPPGA) has biased composition (pro residues). The interval 1–43 (MEVPEPTCPAPPARDQPAPTPGPPGAPGGQASPHLTLGPVLLP) is disordered. C2H2-type zinc fingers lie at residues 144–166 (YLCPHCGRDCLKPSVLEKHIRSH) and 172–196 (FPCATCGIAFKTQSNLYKHRRTQTH). Disordered stretches follow at residues 193–250 (TQTH…SPGA), 270–398 (GSAF…AGLE), 516–557 (WLEP…PSGH), 663–931 (EAAG…VLSA), 950–1062 (TPLP…TCEA), 1100–1119 (NWELGEPPGNAPEDPSSGPL), 1137–1176 (LTRPQGVPPGWPELALSSHSGTSRSHSTRSPHSTQNPFPS), 1216–1243 (LRDEGPNGPPGSNGGWTWTSPGEGGPAQ), 1510–1597 (SAES…GQYG), and 1620–1677 (LITR…VIEI). Basic and acidic residues-rich tracts occupy residues 216–232 (EGDKAGEPPRPEGRGES) and 325–341 (KPWDAKAPEGRLRKCES). Residues 376 to 385 (EGGPGPGPGV) are compositionally biased toward gly residues. Residues 391–423 (GAREAGLELEKKRLEERIAQLISHNQAVVDDAQ) are a coiled coil. Basic and acidic residues-rich tracts occupy residues 517 to 526 (LEPREPRDPW), 674 to 684 (QDRRTPVHEDI), 707 to 727 (PTKHGETVARRGDSDRPRVEE), and 813 to 834 (SGEDKLPSERKKLKVEDLHSWK). Low complexity-rich tracts occupy residues 880-894 (LESSGASLAAASVAL) and 905-919 (PLHPAAPAPAEHPSL). Residues 1153-1170 (SSHSGTSRSHSTRSPHST) show a composition bias toward low complexity. The span at 1518-1531 (QTAGRTLTSSSPDS) shows a compositional bias: polar residues. Residues 1649 to 1662 (RSLEGMRKQTRVEF) are compositionally biased toward basic and acidic residues.

This is Zinc finger protein 831 (ZNF831) from Homo sapiens (Human).